The primary structure comprises 973 residues: Translation initiation factor IF-2 (973 aa).

Positions 97–135 (GHIDLDGGQHKKQQEEPKAKEEPKVKEEPKVKEEPKVKE) are enriched in basic and acidic residues. 2 disordered regions span residues 97-343 (GHID…EDVQ) and 353-372 (LTNK…DKRD). The span at 136–155 (APAAPAAQAPVKPAQPAQAP) shows a compositional bias: low complexity. 4 stretches are compositionally biased toward basic and acidic residues: residues 156 to 175 (TEKK…KTVE), 183 to 204 (PKVE…DDNL), 212 to 224 (LESK…KIDL), and 237 to 250 (TKEE…EKQK). Positions 252–266 (NNNRPGNNSNGPGAP) are enriched in low complexity. Basic and acidic residues-rich tracts occupy residues 315–326 (PNRDDRPNNDRK) and 333–343 (VKAEVSEEDVQ). The tr-type G domain maps to 472–642 (ARPPIVTVMG…LLEADLLDLK (171 aa)). A G1 region spans residues 481–488 (GHVDHGKT). 481 to 488 (GHVDHGKT) is a GTP binding site. The tract at residues 506–510 (GITQH) is G2. The interval 528-531 (DTPG) is G3. Residues 528-532 (DTPGH) and 582-585 (NKID) contribute to the GTP site. Residues 582 to 585 (NKID) form a G4 region. The G5 stretch occupies residues 618 to 620 (SAK).

Belongs to the TRAFAC class translation factor GTPase superfamily. Classic translation factor GTPase family. IF-2 subfamily.

The protein localises to the cytoplasm. Its function is as follows. One of the essential components for the initiation of protein synthesis. Protects formylmethionyl-tRNA from spontaneous hydrolysis and promotes its binding to the 30S ribosomal subunits. Also involved in the hydrolysis of GTP during the formation of the 70S ribosomal complex. The chain is Translation initiation factor IF-2 from Parabacteroides distasonis (strain ATCC 8503 / DSM 20701 / CIP 104284 / JCM 5825 / NCTC 11152).